The following is a 172-amino-acid chain: MPDNVLIHAIKADITSLTVDAIVNAANTSLLGGGGVDGAIHRAAGPKLLEACRELGGCLTGEAKITKGYRLPATFVIHTVGPVWHGGNHGEAELLASCYRNSLKLAIEHHCRTIAFPSISTGIYGYPVEQAAAIAITTVREMLADERGIEKVIFCCFSDRDLDVYQKALAAG.

Residues Met1–Gly172 enclose the Macro domain.

This sequence belongs to the MacroD-type family.

This Chlorobaculum tepidum (strain ATCC 49652 / DSM 12025 / NBRC 103806 / TLS) (Chlorobium tepidum) protein is Macro domain-containing protein CT2219.